The sequence spans 326 residues: Ficolin-1 (326 aa).

Positions 1 to 29 (MELSGATMARGLAVLLVLFLHIKNLPAQA) are cleaved as a signal peptide. The 39-residue stretch at 55–93 (GLPGAPGPKGEAGVIGERGERGLPGAPGKAGPVGPKGDR) folds into the Collagen-like domain. Positions 72–111 (RGERGLPGAPGKAGPVGPKGDRGEKGMRGEKGDAGQSQSC) are disordered. Over residues 77–89 (LPGAPGKAGPVGP) the composition is skewed to low complexity. The span at 90–104 (KGDRGEKGMRGEKGD) shows a compositional bias: basic and acidic residues. In terms of domain architecture, Fibrinogen C-terminal spans 109–326 (QSCATGPRNC…KVSEMKVRPA (218 aa)). Cystine bridges form between Cys-111-Cys-139 and Cys-118-Cys-146. Residues 115-154 (PRNCKDLLDRGYFLSGWHTIYLPDCRPLTVLCDMDTDGGG) form an a domain; contributes to trimerization region. The interval 155–243 (WTVFQRRMDG…LVLGAFVGGS (89 aa)) is b domain; contributes to trimerization. Ca(2+)-binding residues include Asp-262, Asp-264, Ser-266, and Ser-268. A disulfide bridge connects residues Cys-270 and Cys-283. Residue 282–284 (DCH) coordinates a carbohydrate. An N-linked (GlcNAc...) asparagine glycan is attached at Asn-305. Residues 317–326 (KVSEMKVRPA) form a p domain region.

It belongs to the ficolin lectin family. Homotrimer. Interacts with elastin/ELN. Interacts (via Fibrinogen C-terminal domain) with FFAR2. Interacts with CRP; may regulate monocyte activation by FCN1. As to expression, peripheral blood leukocytes, monocytes and granulocytes. Also detected in spleen, lung, and thymus, may be due to the presence of tissue macrophages or trapped blood in these tissues. Not detected on lymphocytes.

The protein localises to the secreted. It is found in the cell membrane. Functionally, extracellular lectin functioning as a pattern-recognition receptor in innate immunity. Binds the sugar moieties of pathogen-associated molecular patterns (PAMPs) displayed on microbes and activates the lectin pathway of the complement system. May also activate monocytes through a G protein-coupled receptor, FFAR2, inducing the secretion of interleukin-8/IL-8. Binds preferentially to 9-O-acetylated 2-6-linked sialic acid derivatives and to various glycans containing sialic acid engaged in a 2-3 linkage. This is Ficolin-1 (FCN1) from Homo sapiens (Human).